The sequence spans 305 residues: Dermonecrotic toxin LiSicTox-betaID1 (305 aa).

Residues 1 to 18 (MQLFIILCLAGSAVQLEG) form the signal peptide. Positions 19 to 26 (TELDGVER) are excised as a propeptide. Residue histidine 38 is part of the active site. Mg(2+) contacts are provided by glutamate 58 and aspartate 60. Histidine 74 (nucleophile) is an active-site residue. Intrachain disulfides connect cysteine 78–cysteine 84 and cysteine 80–cysteine 223. Aspartate 118 contacts Mg(2+).

The protein belongs to the arthropod phospholipase D family. Class II subfamily. Class IIb sub-subfamily. Requires Mg(2+) as cofactor. Expressed by the venom gland.

Its subcellular location is the secreted. The enzyme catalyses an N-(acyl)-sphingosylphosphocholine = an N-(acyl)-sphingosyl-1,3-cyclic phosphate + choline. The catalysed reaction is an N-(acyl)-sphingosylphosphoethanolamine = an N-(acyl)-sphingosyl-1,3-cyclic phosphate + ethanolamine. It catalyses the reaction a 1-acyl-sn-glycero-3-phosphocholine = a 1-acyl-sn-glycero-2,3-cyclic phosphate + choline. It carries out the reaction a 1-acyl-sn-glycero-3-phosphoethanolamine = a 1-acyl-sn-glycero-2,3-cyclic phosphate + ethanolamine. Functionally, dermonecrotic toxins cleave the phosphodiester linkage between the phosphate and headgroup of certain phospholipids (sphingolipid and lysolipid substrates), forming an alcohol (often choline) and a cyclic phosphate. This toxin acts on sphingomyelin (SM) with low activity. It may also act on ceramide phosphoethanolamine (CPE), lysophosphatidylcholine (LPC) and lysophosphatidylethanolamine (LPE), but not on lysophosphatidylserine (LPS), and lysophosphatidylglycerol (LPG). It acts by transphosphatidylation, releasing exclusively cyclic phosphate products as second products. Has no or weak activities in inducing dermonecrosis, hemolysis, inflammatory response, platelet aggregation and increase in vessel permeability. In vivo, shows no lethality when injected at higher dose into mice. This chain is Dermonecrotic toxin LiSicTox-betaID1, found in Loxosceles intermedia (Brown spider).